The sequence spans 416 residues: UDP-N-acetylmuramoylalanine--D-glutamate ligase (416 aa).

108-114 lines the ATP pocket; the sequence is GTTGKTT.

It belongs to the MurCDEF family.

Its subcellular location is the cytoplasm. The catalysed reaction is UDP-N-acetyl-alpha-D-muramoyl-L-alanine + D-glutamate + ATP = UDP-N-acetyl-alpha-D-muramoyl-L-alanyl-D-glutamate + ADP + phosphate + H(+). It functions in the pathway cell wall biogenesis; peptidoglycan biosynthesis. Cell wall formation. Catalyzes the addition of glutamate to the nucleotide precursor UDP-N-acetylmuramoyl-L-alanine (UMA). This is UDP-N-acetylmuramoylalanine--D-glutamate ligase from Chlamydia trachomatis serovar A (strain ATCC VR-571B / DSM 19440 / HAR-13).